A 329-amino-acid chain; its full sequence is MYG1 protein (329 aa).

It belongs to the MYG1 family.

This is MYG1 protein from Dictyostelium discoideum (Social amoeba).